The chain runs to 139 residues: Small ribosomal subunit protein uS12m (139 aa).

The N-terminal 29 residues, 1 to 29, are a transit peptide targeting the mitochondrion; that stretch reads MSWSGLLRGLSMSLNYGLALAPRPWGTRP. Residues 37-57 form a disordered region; sequence HRRGPPKFPPSKPGPTEGRPQ.

Belongs to the universal ribosomal protein uS12 family. Component of the mitochondrial ribosome small subunit (28S) which comprises a 12S rRNA and about 30 distinct proteins.

It is found in the mitochondrion. In Bos taurus (Bovine), this protein is Small ribosomal subunit protein uS12m (MRPS12).